A 311-amino-acid polypeptide reads, in one-letter code: Pyrimidine-specific ribonucleoside hydrolase RihA (311 aa).

H240 is an active-site residue.

Belongs to the IUNH family. RihA subfamily.

Its function is as follows. Hydrolyzes with equal efficiency cytidine or uridine to ribose and cytosine or uracil, respectively. In Escherichia coli O127:H6 (strain E2348/69 / EPEC), this protein is Pyrimidine-specific ribonucleoside hydrolase RihA.